The following is a 361-amino-acid chain: Phosphoserine aminotransferase (361 aa).

Arg43 serves as a coordination point for L-glutamate. Pyridoxal 5'-phosphate-binding positions include 77–78, Trp103, Thr153, Asp173, and Gln196; that span reads AS. Position 197 is an N6-(pyridoxal phosphate)lysine (Lys197). Pyridoxal 5'-phosphate is bound at residue 238–239; it reads NT.

This sequence belongs to the class-V pyridoxal-phosphate-dependent aminotransferase family. SerC subfamily. In terms of assembly, homodimer. Pyridoxal 5'-phosphate serves as cofactor.

Its subcellular location is the cytoplasm. The catalysed reaction is O-phospho-L-serine + 2-oxoglutarate = 3-phosphooxypyruvate + L-glutamate. The enzyme catalyses 4-(phosphooxy)-L-threonine + 2-oxoglutarate = (R)-3-hydroxy-2-oxo-4-phosphooxybutanoate + L-glutamate. It functions in the pathway amino-acid biosynthesis; L-serine biosynthesis; L-serine from 3-phospho-D-glycerate: step 2/3. Functionally, catalyzes the reversible conversion of 3-phosphohydroxypyruvate to phosphoserine and of 3-hydroxy-2-oxo-4-phosphonooxybutanoate to phosphohydroxythreonine. The polypeptide is Phosphoserine aminotransferase (Bacillus anthracis (strain A0248)).